We begin with the raw amino-acid sequence, 156 residues long: MKTLDINQIKQYLPHRYPLLLVDRVLNWESGKSITAIKNVTVNEEFFNGHFPHKPVMPGVLMIEALAQTAALLSFLTMGQKPDDNSVVYFIGIDGARFKRPVEPGDQLKMEVEILRNARGIWKYKATGSVDGQLALEAELMCTMRTINDASPAAGQ.

Histidine 50 is a catalytic residue.

It belongs to the thioester dehydratase family. FabZ subfamily.

Its subcellular location is the cytoplasm. It carries out the reaction a (3R)-hydroxyacyl-[ACP] = a (2E)-enoyl-[ACP] + H2O. Involved in unsaturated fatty acids biosynthesis. Catalyzes the dehydration of short chain beta-hydroxyacyl-ACPs and long chain saturated and unsaturated beta-hydroxyacyl-ACPs. The protein is 3-hydroxyacyl-[acyl-carrier-protein] dehydratase FabZ of Janthinobacterium sp. (strain Marseille) (Minibacterium massiliensis).